A 1024-amino-acid chain; its full sequence is PH and SEC7 domain-containing protein 1 (1024 aa).

Disordered stretches follow at residues 25-98, 113-230, 246-401, and 430-536; these read WLPE…GAQS, PLNG…EVSS, SLDP…GPDS, and ASPG…LDST. Pro residues predominate over residues 71-95; that stretch reads RGPPSPRVAPSPWAPSSPTGQPPPG. Ser-126 and Ser-156 each carry phosphoserine. A compositionally biased stretch (polar residues) spans 215 to 230; that stretch reads FLNQGDTWSSPREVSS. The span at 300–313 shows a compositional bias: acidic residues; that stretch reads DIDEVLAEREEADS. Over residues 327–342 the composition is skewed to pro residues; the sequence is TAYPPAPRPGPLPGPH. Acidic residues predominate over residues 349-369; that stretch reads NEDEDDDEAGGEEDVDDEVFE. Positions 445-463 are enriched in pro residues; that stretch reads PPQPPAPRPDPPAPAPLAP. An SEC7 domain is found at 512-706; sequence GAAPLGSEPP…KALYSSIKNE (195 aa). Position 720 is a phosphoserine (Ser-720). Residues 756–869 enclose the PH domain; sequence AVYKHGALVR…WITRINVVAA (114 aa). Residues 898 to 924 are a coiled coil; the sequence is LSQEEQVRTHEAKLKAMASELREHRAA. The segment at 976–1024 is disordered; that stretch reads ALAQAGSTEDGLPPSHSSPSLQPKPSSQPRAQRHSSEPRPGAGSGRRKP. Residues 987-1004 show a composition bias toward low complexity; that stretch reads LPPSHSSPSLQPKPSSQP.

It belongs to the PSD family. As to quaternary structure, interacts with ACTN1. Interacts (ARF6-bound form) with KCNK1; does not interact with KCNK1 in the absence of ARF6. In terms of tissue distribution, isoform 2 is expressed in the brain.

The protein resides in the cell membrane. It is found in the cell projection. It localises to the ruffle membrane. Its subcellular location is the cleavage furrow. Its function is as follows. Guanine nucleotide exchange factor for ARF6. Induces cytoskeletal remodeling. This chain is PH and SEC7 domain-containing protein 1 (PSD), found in Homo sapiens (Human).